Reading from the N-terminus, the 281-residue chain is Imidazole glycerol phosphate synthase subunit HisF (281 aa).

Residues Asp12 and Asp131 contribute to the active site. The disordered stretch occupies residues 256-281; sequence VRQAEPLPQPAREGLGDSARRAMSSG.

This sequence belongs to the HisA/HisF family. As to quaternary structure, heterodimer of HisH and HisF.

It is found in the cytoplasm. It catalyses the reaction 5-[(5-phospho-1-deoxy-D-ribulos-1-ylimino)methylamino]-1-(5-phospho-beta-D-ribosyl)imidazole-4-carboxamide + L-glutamine = D-erythro-1-(imidazol-4-yl)glycerol 3-phosphate + 5-amino-1-(5-phospho-beta-D-ribosyl)imidazole-4-carboxamide + L-glutamate + H(+). It participates in amino-acid biosynthesis; L-histidine biosynthesis; L-histidine from 5-phospho-alpha-D-ribose 1-diphosphate: step 5/9. IGPS catalyzes the conversion of PRFAR and glutamine to IGP, AICAR and glutamate. The HisF subunit catalyzes the cyclization activity that produces IGP and AICAR from PRFAR using the ammonia provided by the HisH subunit. The polypeptide is Imidazole glycerol phosphate synthase subunit HisF (Thermosynechococcus vestitus (strain NIES-2133 / IAM M-273 / BP-1)).